A 289-amino-acid polypeptide reads, in one-letter code: D-alanine aminotransferase (289 aa).

Y31 contributes to the substrate binding site. R50 contributes to the pyridoxal 5'-phosphate binding site. R99 and H101 together coordinate substrate. The residue at position 147 (K147) is an N6-(pyridoxal phosphate)lysine. Pyridoxal 5'-phosphate is bound at residue E179.

This sequence belongs to the class-IV pyridoxal-phosphate-dependent aminotransferase family. Homodimer. Pyridoxal 5'-phosphate is required as a cofactor.

The catalysed reaction is D-alanine + 2-oxoglutarate = D-glutamate + pyruvate. In terms of biological role, acts on the D-isomers of alanine, leucine, aspartate, glutamate, aminobutyrate, norvaline and asparagine. The enzyme transfers an amino group from a substrate D-amino acid to the pyridoxal phosphate cofactor to form pyridoxamine and an alpha-keto acid in the first half-reaction. The second half-reaction is the reverse of the first, transferring the amino group from the pyridoxamine to a second alpha-keto acid to form the product D-amino acid via a ping-pong mechanism. This is an important process in the formation of D-alanine and D-glutamate, which are essential bacterial cell wall components. This chain is D-alanine aminotransferase (dat), found in Listeria monocytogenes serovar 1/2a (strain ATCC BAA-679 / EGD-e).